We begin with the raw amino-acid sequence, 629 residues long: DNA-directed RNA polymerase subunit beta' (629 aa).

Residues cysteine 70, cysteine 72, cysteine 85, and cysteine 88 each coordinate Zn(2+). The Mg(2+) site is built by aspartate 472, aspartate 474, and aspartate 476.

The protein belongs to the RNA polymerase beta' chain family. RpoC1 subfamily. In terms of assembly, in plastids the minimal PEP RNA polymerase catalytic core is composed of four subunits: alpha, beta, beta', and beta''. When a (nuclear-encoded) sigma factor is associated with the core the holoenzyme is formed, which can initiate transcription. It depends on Mg(2+) as a cofactor. Zn(2+) serves as cofactor.

It is found in the plastid. Its subcellular location is the chloroplast. The catalysed reaction is RNA(n) + a ribonucleoside 5'-triphosphate = RNA(n+1) + diphosphate. Its function is as follows. DNA-dependent RNA polymerase catalyzes the transcription of DNA into RNA using the four ribonucleoside triphosphates as substrates. In Pyropia yezoensis (Susabi-nori), this protein is DNA-directed RNA polymerase subunit beta'.